We begin with the raw amino-acid sequence, 407 residues long: MESRKDMVVFLDGGQLGTLVGKRVSNLSEAVGSPLPEPPEKMVPRGCLSPRAVPPATRERGGGGPEEEPVDGLAGSAAGPGAEPQVAGAAMLGPGPPAPSVDSLSGQGQPSSSDTESDFYEEIEVSCTPDCATGNAEYQHSKGSGSEALVGSPNGGSETPKSNGGSGGGGSQGTLACSASDQMRRYRTAFTREQIARLEKEFYRENYVSRPRRCELAAALNLPETTIKVWFQNRRMKDKRQRLAMTWPHPADPAFYTYMMSHAAAAGGLPYPFPSHLPLPYYSPVGLGAASAASAAASPFSGSLRPLDTFRVLSQPYPRPELLCAFRHPPLYPGPAHGLGASAGGPCSCLACHSGPANGLAPRAAAASDFTCASTSRSDSFLTFAPSVLSKASSVALDQREEVPLTR.

2 disordered regions span residues 29–120 and 137–179; these read EAVG…SDFY and EYQH…ACSA. Residues 102-114 are compositionally biased toward polar residues; the sequence is DSLSGQGQPSSSD. The homeobox DNA-binding region spans 183–242; that stretch reads MRRYRTAFTREQIARLEKEFYRENYVSRPRRCELAAALNLPETTIKVWFQNRRMKDKRQR.

The protein belongs to the even-skipped homeobox family.

It localises to the nucleus. In terms of biological role, may play a role in the specification of neuronal cell types. The sequence is that of Homeobox even-skipped homolog protein 1 (EVX1) from Homo sapiens (Human).